The primary structure comprises 991 residues: MHSRLKFLAYLHFICASSIFWPEFSSAQQQQQTVSLTEKIPLGAIFEQGTDDVQSAFKYAMLNHNLNVSSRRFELQAYVDVINTADAFKLSRLICNQFSRGVYSMLGAVSPDSFDTLHSYSNTFQMPFVTPWFPEKVLAPSSGLLDFAISMRPDYHQAIIDTIQYYGWQSIIYLYDSHDGLLRLQQIYQELKPGNETFRVQMVKRIANVTMAIEFLHTLEDLGRFSKKRIVLDCPAEMAKEIIVQHVRDIKLGRRTYHYLLSGLVMDNHWPSDVVEFGAINITGFRIVDSNRRAVRDFHDSRKRLEPSGQSQSQNAGGPNSLPAISAQAALMYDAVFVLVEAFNRILRKKPDQFRSNHLQRRSHGGSSSSSATGTNESSALLDCNTSKGWVTPWEQGEKISRVLRKVEIDGLSGEIRFDEDGRRINYTLHVVEMSVNSTLQQVAEWRDDAGLLPLHSHNYASSSRSASASTGDYDRNHTYIVSSLLEEPYLSLKQYTYGESLVGNDRFEGYCKDLADMLAAQLGIKYEIRLVQDGNYGAENQYAPGGWDGMVGELIRKEADIAISAMTITAERERVIDFSKPFMTLGISIMIKKPVKQTPGVFSFLNPLSQEIWISVILSYVGVSFVLYFVTRFPPYEWRIVRRPQADSTAQQPPGIIGGATLSEPQAHVPPVPPNEFTMLNSFWYSLAAFMQQGCDITPPSIAGRIAAAVWWFFTIILISSYTANLAAFLTVERMVAPIKTPEDLTMQTDVNYGTLLYGSTWEFFRRSQIGLHNKMWEYMNANQHHSVHTYDEGIRRVRQSKGKYALLVESPKNEYVNARPPCDTMKVGRNIDTKGFGVATPIGSPLRKRLNEAVLTLKENGELLRIRNKWWFDKTECNLDQETSTPNELSLSNVAGIYYILIGGLLLAVIVAIMEFFCRNKTPQLKSPGSNGSAGGVPGMLASSTYQRDSLSDAIMHSQAKLAMQASSEYDERLVGVELASNVRYQYSM.

Positions 1-27 (MHSRLKFLAYLHFICASSIFWPEFSSA) are cleaved as a signal peptide. Residues 28–611 (QQQQQTVSLT…VFSFLNPLSQ (584 aa)) lie on the Extracellular side of the membrane. Residues asparagine 67, asparagine 195, asparagine 208, and asparagine 281 are each glycosylated (N-linked (GlcNAc...) asparagine). Disordered stretches follow at residues 300-321 (DSRKRLEPSGQSQSQNAGGPNS) and 354-379 (FRSNHLQRRSHGGSSSSSATGTNESS). Polar residues predominate over residues 308 to 318 (SGQSQSQNAGG). The segment covering 365 to 379 (GGSSSSSATGTNESS) has biased composition (low complexity). N-linked (GlcNAc...) asparagine glycans are attached at residues asparagine 376, asparagine 385, asparagine 426, asparagine 437, and asparagine 477. Residues 612–632 (EIWISVILSYVGVSFVLYFVT) form a helical membrane-spanning segment. Residues 633-710 (RFPPYEWRIV…PSIAGRIAAA (78 aa)) are Cytoplasmic-facing. A helical transmembrane segment spans residues 711 to 731 (VWWFFTIILISSYTANLAAFL). Residues 732–895 (TVERMVAPIK…STPNELSLSN (164 aa)) lie on the Extracellular side of the membrane. The chain crosses the membrane as a helical span at residues 896 to 916 (VAGIYYILIGGLLLAVIVAIM). Over 917–991 (EFFCRNKTPQ…ASNVRYQYSM (75 aa)) the chain is Cytoplasmic.

This sequence belongs to the glutamate-gated ion channel (TC 1.A.10.1) family. Homooligomer. Central nervous system.

It localises to the cell membrane. The protein resides in the postsynaptic cell membrane. Functionally, receptor for glutamate. L-glutamate acts as an excitatory neurotransmitter at many synapses in the central nervous system. The postsynaptic actions of Glu are mediated by a variety of receptors that are named according to their selective agonists. Forms ligand-gated ion channels which are activated by kainate. The polypeptide is Glutamate receptor 1 (GluRIA) (Drosophila melanogaster (Fruit fly)).